Reading from the N-terminus, the 168-residue chain is Peptide methionine sulfoxide reductase MsrA 2 (168 aa).

Cys-11 is an active-site residue.

The protein belongs to the MsrA Met sulfoxide reductase family.

It carries out the reaction L-methionyl-[protein] + [thioredoxin]-disulfide + H2O = L-methionyl-(S)-S-oxide-[protein] + [thioredoxin]-dithiol. It catalyses the reaction [thioredoxin]-disulfide + L-methionine + H2O = L-methionine (S)-S-oxide + [thioredoxin]-dithiol. In terms of biological role, has an important function as a repair enzyme for proteins that have been inactivated by oxidation. Catalyzes the reversible oxidation-reduction of methionine sulfoxide in proteins to methionine. The sequence is that of Peptide methionine sulfoxide reductase MsrA 2 from Rhodopirellula baltica (strain DSM 10527 / NCIMB 13988 / SH1).